Here is a 365-residue protein sequence, read N- to C-terminus: Fructose-1,6-bisphosphatase class 1 2 (365 aa).

Mg(2+) is bound by residues Glu-100, Asp-122, Leu-124, and Asp-125. Residues 125 to 128 and Asn-221 contribute to the substrate site; that span reads DGSS. Residue Glu-293 participates in Mg(2+) binding.

Belongs to the FBPase class 1 family. As to quaternary structure, homotetramer. Mg(2+) is required as a cofactor.

It is found in the cytoplasm. The enzyme catalyses beta-D-fructose 1,6-bisphosphate + H2O = beta-D-fructose 6-phosphate + phosphate. It participates in carbohydrate biosynthesis; gluconeogenesis. The protein is Fructose-1,6-bisphosphatase class 1 2 of Leptothrix cholodnii (strain ATCC 51168 / LMG 8142 / SP-6) (Leptothrix discophora (strain SP-6)).